The sequence spans 128 residues: Ribonuclease P protein component (128 aa).

This sequence belongs to the RnpA family. Consists of a catalytic RNA component (M1 or rnpB) and a protein subunit.

The catalysed reaction is Endonucleolytic cleavage of RNA, removing 5'-extranucleotides from tRNA precursor.. In terms of biological role, RNaseP catalyzes the removal of the 5'-leader sequence from pre-tRNA to produce the mature 5'-terminus. It can also cleave other RNA substrates such as 4.5S RNA. The protein component plays an auxiliary but essential role in vivo by binding to the 5'-leader sequence and broadening the substrate specificity of the ribozyme. The protein is Ribonuclease P protein component of Prochlorococcus marinus (strain NATL1A).